A 477-amino-acid chain; its full sequence is Aspartyl/glutamyl-tRNA(Asn/Gln) amidotransferase subunit B (477 aa).

The protein belongs to the GatB/GatE family. GatB subfamily. In terms of assembly, heterotrimer of A, B and C subunits.

The enzyme catalyses L-glutamyl-tRNA(Gln) + L-glutamine + ATP + H2O = L-glutaminyl-tRNA(Gln) + L-glutamate + ADP + phosphate + H(+). The catalysed reaction is L-aspartyl-tRNA(Asn) + L-glutamine + ATP + H2O = L-asparaginyl-tRNA(Asn) + L-glutamate + ADP + phosphate + 2 H(+). Allows the formation of correctly charged Asn-tRNA(Asn) or Gln-tRNA(Gln) through the transamidation of misacylated Asp-tRNA(Asn) or Glu-tRNA(Gln) in organisms which lack either or both of asparaginyl-tRNA or glutaminyl-tRNA synthetases. The reaction takes place in the presence of glutamine and ATP through an activated phospho-Asp-tRNA(Asn) or phospho-Glu-tRNA(Gln). This is Aspartyl/glutamyl-tRNA(Asn/Gln) amidotransferase subunit B from Legionella pneumophila (strain Lens).